Reading from the N-terminus, the 140-residue chain is Large ribosomal subunit protein uL11 (140 aa).

Belongs to the universal ribosomal protein uL11 family. Part of the ribosomal stalk of the 50S ribosomal subunit. Interacts with L10 and the large rRNA to form the base of the stalk. L10 forms an elongated spine to which L12 dimers bind in a sequential fashion forming a multimeric L10(L12)X complex. Post-translationally, one or more lysine residues are methylated.

Forms part of the ribosomal stalk which helps the ribosome interact with GTP-bound translation factors. The sequence is that of Large ribosomal subunit protein uL11 from Syntrophobacter fumaroxidans (strain DSM 10017 / MPOB).